The following is a 615-amino-acid chain: Ras association domain-containing protein 1 homolog (615 aa).

Disordered stretches follow at residues 1 to 29 (MLRSVVNNNDKAKESEQSVRVATDDPTYQ) and 69 to 89 (SDDEKMETSSTSSPQSEQSIG). Low complexity predominate over residues 76–87 (TSSTSSPQSEQS). A Phorbol-ester/DAG-type zinc finger spans residues 164-214 (NHSFKTHSLLHPTWCDKCGDFIWGILKEALKCEHCNYTCHARCRDLVTLDC). Positions 249–268 (PAMSSSTGSDKENGNGNSAG) are disordered. Residues 251 to 268 (MSSSTGSDKENGNGNSAG) show a composition bias toward polar residues. Residues 396-496 (KTTSLRTITS…RALVLQENDT (101 aa)) form the Ras-associating domain. One can recognise an SARAH domain in the interval 498–545 (DILWDAFEIPELENFLRILGMEEKQYVFQTQQKYQQYRYHLDAELRQR).

In terms of assembly, interacts with rab-39 (GTP-bound form). Interacts (via SARAH domain) with cst-1; the interaction is required for the phosphorylation of cst-1. As to expression, expressed in the pharynx, epithelial cells, ciliated neurons in the head, body wall muscles, hypodermis, vulva, gonadal sheath cells, tail hypodermis and in coelomocytes. In terms of tissue distribution, expressed in the pharynx, neurons and vulva.

It is found in the cytoplasm. The protein resides in the cytoskeleton. Involved in embryonic morphogenesis. Plays a role in the organization of apical filamentous actin in epithelial cells of the developing embryo. May play a role in let-60-mediated vulval development. May induce nuclear condensation. Positively regulates the oxidative stress response, and this may be in association with the small GTPase rab-39. Not required for muscle integrity. In Caenorhabditis elegans, this protein is Ras association domain-containing protein 1 homolog.